The sequence spans 117 residues: MPRVKRGVQARARHKKVLKQAKGYYGARSRVYRVAFQAVTKAGQYAYRDRRNKKRVFRQLWIARINAAARQNGLSYSRFINGLKKASIEIDRKILADIAVFDKVAFAALVAKANAAL.

It belongs to the bacterial ribosomal protein bL20 family.

Its function is as follows. Binds directly to 23S ribosomal RNA and is necessary for the in vitro assembly process of the 50S ribosomal subunit. It is not involved in the protein synthesizing functions of that subunit. This chain is Large ribosomal subunit protein bL20, found in Aliivibrio salmonicida (strain LFI1238) (Vibrio salmonicida (strain LFI1238)).